A 452-amino-acid polypeptide reads, in one-letter code: Tryptophan biosynthesis protein TrpCF (452 aa).

The interval 1 to 253 is indole-3-glycerol phosphate synthase; it reads MPSVLENILK…KACIKLILGE (253 aa). Positions 254-448 are N-(5'-phosphoribosyl)anthranilate isomerase; the sequence is NKVCGLTRIK…KDKIKQLARI (195 aa).

The protein in the N-terminal section; belongs to the TrpC family. This sequence in the C-terminal section; belongs to the TrpF family.

The catalysed reaction is N-(5-phospho-beta-D-ribosyl)anthranilate = 1-(2-carboxyphenylamino)-1-deoxy-D-ribulose 5-phosphate. It carries out the reaction 1-(2-carboxyphenylamino)-1-deoxy-D-ribulose 5-phosphate + H(+) = (1S,2R)-1-C-(indol-3-yl)glycerol 3-phosphate + CO2 + H2O. It functions in the pathway amino-acid biosynthesis; L-tryptophan biosynthesis; L-tryptophan from chorismate: step 3/5. Its pathway is amino-acid biosynthesis; L-tryptophan biosynthesis; L-tryptophan from chorismate: step 4/5. Functionally, bifunctional enzyme that catalyzes two sequential steps of tryptophan biosynthetic pathway. The first reaction is catalyzed by the isomerase, coded by the TrpF domain; the second reaction is catalyzed by the synthase, coded by the TrpC domain. The chain is Tryptophan biosynthesis protein TrpCF (trpC) from Helicobacter pylori (strain J99 / ATCC 700824) (Campylobacter pylori J99).